The sequence spans 200 residues: dTTP/UTP pyrophosphatase (200 aa).

The active-site Proton acceptor is the D80.

This sequence belongs to the Maf family. YhdE subfamily. Requires a divalent metal cation as cofactor.

It localises to the cytoplasm. The catalysed reaction is dTTP + H2O = dTMP + diphosphate + H(+). The enzyme catalyses UTP + H2O = UMP + diphosphate + H(+). Nucleoside triphosphate pyrophosphatase that hydrolyzes dTTP and UTP. May have a dual role in cell division arrest and in preventing the incorporation of modified nucleotides into cellular nucleic acids. In Pasteurella multocida (strain Pm70), this protein is dTTP/UTP pyrophosphatase.